An 89-amino-acid polypeptide reads, in one-letter code: Phasin PhaP (89 aa).

Helix regions lie at residues 3–26 (TQFFEEYQTQLLDWQKKFFSTWME) and 39–83 (DTFE…ALRQ).

As to quaternary structure, homotetramer.

The protein resides in the cellular thylakoid membrane. The protein localises to the cytoplasm. It participates in biopolymer metabolism; poly-(R)-3-hydroxybutanoate biosynthesis. In terms of biological role, a phasin, it attaches to the polyhydroxybutyrate (PHB) granule surface regulating the number and size of PHB granules within a cell. It probably also acts as a regulator affecting the biosynthetic activity of PHB synthase in vivo. The chain is Phasin PhaP from Synechocystis sp. (strain ATCC 27184 / PCC 6803 / Kazusa).